We begin with the raw amino-acid sequence, 403 residues long: Probable tRNA sulfurtransferase (403 aa).

Residues 60–165 (QLAEERLKPI…KEGVFLSCRT (106 aa)) enclose the THUMP domain. ATP is bound by residues 183–184 (ML), 208–209 (HF), Arg-265, Gly-287, and Gln-296.

The protein belongs to the ThiI family.

It is found in the cytoplasm. It carries out the reaction [ThiI sulfur-carrier protein]-S-sulfanyl-L-cysteine + a uridine in tRNA + 2 reduced [2Fe-2S]-[ferredoxin] + ATP + H(+) = [ThiI sulfur-carrier protein]-L-cysteine + a 4-thiouridine in tRNA + 2 oxidized [2Fe-2S]-[ferredoxin] + AMP + diphosphate. It catalyses the reaction [ThiS sulfur-carrier protein]-C-terminal Gly-Gly-AMP + S-sulfanyl-L-cysteinyl-[cysteine desulfurase] + AH2 = [ThiS sulfur-carrier protein]-C-terminal-Gly-aminoethanethioate + L-cysteinyl-[cysteine desulfurase] + A + AMP + 2 H(+). It participates in cofactor biosynthesis; thiamine diphosphate biosynthesis. In terms of biological role, catalyzes the ATP-dependent transfer of a sulfur to tRNA to produce 4-thiouridine in position 8 of tRNAs, which functions as a near-UV photosensor. Also catalyzes the transfer of sulfur to the sulfur carrier protein ThiS, forming ThiS-thiocarboxylate. This is a step in the synthesis of thiazole, in the thiamine biosynthesis pathway. The sulfur is donated as persulfide by IscS. The protein is Probable tRNA sulfurtransferase of Listeria monocytogenes serovar 1/2a (strain ATCC BAA-679 / EGD-e).